The following is a 240-amino-acid chain: 1-(5-phosphoribosyl)-5-[(5-phosphoribosylamino)methylideneamino] imidazole-4-carboxamide isomerase (240 aa).

The active-site Proton acceptor is the D8. D130 serves as the catalytic Proton donor.

Belongs to the HisA/HisF family.

It localises to the cytoplasm. The catalysed reaction is 1-(5-phospho-beta-D-ribosyl)-5-[(5-phospho-beta-D-ribosylamino)methylideneamino]imidazole-4-carboxamide = 5-[(5-phospho-1-deoxy-D-ribulos-1-ylimino)methylamino]-1-(5-phospho-beta-D-ribosyl)imidazole-4-carboxamide. It participates in amino-acid biosynthesis; L-histidine biosynthesis; L-histidine from 5-phospho-alpha-D-ribose 1-diphosphate: step 4/9. This is 1-(5-phosphoribosyl)-5-[(5-phosphoribosylamino)methylideneamino] imidazole-4-carboxamide isomerase from Elusimicrobium minutum (strain Pei191).